The sequence spans 618 residues: Baculoviral IAP repeat-containing protein 2 (618 aa).

3 BIR repeats span residues Glu46 to Ile113, Glu184 to Leu250, and His269 to Leu336. Zn(2+)-binding residues include Cys306, Cys309, His326, and Cys333. One can recognise a CARD domain in the interval Met453–Lys543. Residues Cys571–Arg606 form an RING-type zinc finger.

It belongs to the IAP family. As to quaternary structure, interacts with DIABLO/SMAC and with PRSS25; these interactions inhibit apoptotic suppressor activity. Interacts with CASP9. Interacts (via BIR domains) with TRAF2; the interaction is required for IKBKE ubiquitination. Interacts with E2F1, RIPK1, RIPK2, RIPK3, RIPK4, BIRC5/survivin and USP19. HSP90AB1. Interacts with UBXN1. Interacts with GSK3B. Interacts with several death receptors, inclusing FAS, TNFRSF10A and TNFRSF10B. Recruited to TNFRSF10B in the absence of receptor stimulation. When TNFRSF10B is stimulated, further recruited to the receptor and cleaved by caspases. Proteolytic fragments remain associated with TNFRSF10B. In terms of processing, auto-ubiquitinated and degraded by the proteasome in apoptotic cells. Upon stimulation of death receptors, including TNFRSF10B, recruited to receptors and cleaved by caspases. Proteolytic fragments remain associated with the receptors. This cleavage presumably inactivates the protein. Present in many fetal and adult tissues. Mainly expressed in adult skeletal muscle, thymus, testis, ovary, and pancreas, low or absent in brain and peripheral blood leukocytes.

It is found in the cytoplasm. The protein resides in the nucleus. It carries out the reaction S-ubiquitinyl-[E2 ubiquitin-conjugating enzyme]-L-cysteine + [acceptor protein]-L-lysine = [E2 ubiquitin-conjugating enzyme]-L-cysteine + N(6)-ubiquitinyl-[acceptor protein]-L-lysine.. With respect to regulation, the CARD domain inhibits the activation of E3 ubiquitin ligase activity by preventing RING domain dimerization and E2 ubiquitin donor binding and activation. The CARD domain-mediated autoinhibition of the E3 ubiquitin-protein ligase activity suppresses cell proliferation and migration. USP19 regulates the stability of BIRC2/c-IAP1 by preventing its ubiquitination. Its function is as follows. Multi-functional protein which regulates not only caspases and apoptosis, but also modulates inflammatory signaling and immunity, mitogenic kinase signaling, and cell proliferation, as well as cell invasion and metastasis. Acts as an E3 ubiquitin-protein ligase regulating NF-kappa-B signaling and regulates both canonical and non-canonical NF-kappa-B signaling by acting in opposite directions: acts as a positive regulator of the canonical pathway and suppresses constitutive activation of non-canonical NF-kappa-B signaling. The target proteins for its E3 ubiquitin-protein ligase activity include: RIPK1, RIPK2, RIPK3, RIPK4, CASP3, CASP7, CASP8, TRAF2, DIABLO/SMAC, MAP3K14/NIK, MAP3K5/ASK1, IKBKG/NEMO, IKBKE and MXD1/MAD1. Can also function as an E3 ubiquitin-protein ligase of the NEDD8 conjugation pathway, targeting effector caspases for neddylation and inactivation. Acts as an important regulator of innate immune signaling via regulation of Toll-like receptors (TLRs), Nodlike receptors (NLRs) and RIG-I like receptors (RLRs), collectively referred to as pattern recognition receptors (PRRs). Protects cells from spontaneous formation of the ripoptosome, a large multi-protein complex that has the capability to kill cancer cells in a caspase-dependent and caspase-independent manner. Suppresses ripoptosome formation by ubiquitinating RIPK1 and CASP8. Can stimulate the transcriptional activity of E2F1. Plays a role in the modulation of the cell cycle. This is Baculoviral IAP repeat-containing protein 2 (BIRC2) from Homo sapiens (Human).